We begin with the raw amino-acid sequence, 242 residues long: Beta-carotene ketolase (242 aa).

The enzyme catalyses all-trans-beta-carotene + 2 AH2 + 2 O2 = echinenone + 2 A + 3 H2O. The catalysed reaction is echinenone + 2 AH2 + 2 O2 = canthaxanthin + 2 A + 3 H2O. Its pathway is carotenoid biosynthesis; astaxanthin biosynthesis. Functionally, converts beta-carotene to canthaxanthin via echinenone. The polypeptide is Beta-carotene ketolase (crtW) (Paracoccus sp. (strain N81106 / MBIC 01143) (Agrobacterium aurantiacum)).